A 201-amino-acid chain; its full sequence is 3-isopropylmalate dehydratase small subunit (201 aa).

This sequence belongs to the LeuD family. LeuD type 1 subfamily. As to quaternary structure, heterodimer of LeuC and LeuD.

It catalyses the reaction (2R,3S)-3-isopropylmalate = (2S)-2-isopropylmalate. The protein operates within amino-acid biosynthesis; L-leucine biosynthesis; L-leucine from 3-methyl-2-oxobutanoate: step 2/4. In terms of biological role, catalyzes the isomerization between 2-isopropylmalate and 3-isopropylmalate, via the formation of 2-isopropylmaleate. In Rhodopseudomonas palustris (strain BisA53), this protein is 3-isopropylmalate dehydratase small subunit.